A 295-amino-acid polypeptide reads, in one-letter code: Inorganic pyrophosphatase 1 (295 aa).

The active-site Nucleophile is the Asp-19. Positions 19 and 21 each coordinate Mg(2+). Catalysis depends on Asp-21, which acts as the Proton donor. Substrate-binding residues include Asp-30 and Asp-105. A Mg(2+)-binding site is contributed by Asp-190.

This sequence belongs to the HAD-like hydrolase superfamily. As to quaternary structure, tetramer. Requires Mg(2+) as cofactor. Fe(2+) serves as cofactor. Ni(2+) is required as a cofactor. The cofactor is Co(2+). It depends on Mn(2+) as a cofactor.

The catalysed reaction is diphosphate + H2O = 2 phosphate + H(+). Functionally, catalyzes the specific cleavage of pyrophosphate. This chain is Inorganic pyrophosphatase 1 (PS2), found in Arabidopsis thaliana (Mouse-ear cress).